A 151-amino-acid polypeptide reads, in one-letter code: Transcriptional regulator MraZ (151 aa).

2 SpoVT-AbrB domains span residues 5–52 (ANAI…PLPE) and 81–124 (AVDL…DEDA).

Belongs to the MraZ family. As to quaternary structure, forms oligomers.

It localises to the cytoplasm. It is found in the nucleoid. The chain is Transcriptional regulator MraZ from Pseudomonas aeruginosa (strain LESB58).